Consider the following 264-residue polypeptide: Short-chain dehydrogenase/reductase malC (264 aa).

A helical transmembrane segment spans residues 13–35 (GKNVLIIGGTSGIGFAVAQLVIE). The NADP(+) site is built by Thr22, Ser23, Ile25, Ser45, Asn46, Lys49, Asp75, Asn88, Arg130, Val202, and Thr204. N-linked (GlcNAc...) asparagine glycosylation is present at Asn249.

It belongs to the short-chain dehydrogenases/reductases (SDR) family.

It localises to the membrane. The enzyme catalyses 1-hydroxy-3-{[2-(1,1-dimethylallyl)-indol-3-yl]methyl}-6H,7H,8H-5lambda(5)-pyrrolo[1,2-a]pyrazine + NADPH + H(+) = 1-hydroxy-3-{[2-(1,1-dimethylallyl)-indol-3-yl]methyl}-4H,6H,7H,8H-pyrrolo[1,2-a]pyrazine + NADP(+). It carries out the reaction 1-hydroxy-3-{[2-(1,1-dimethylallyl)-indol-3-yl]methyl}-4H,6H,7H,8H-pyrrolo[1,2-a]pyrazine = (+)-premalbrancheamide. The protein operates within alkaloid biosynthesis. Short-chain dehydrogenase/reductase; part of the gene cluster that mediates the biosynthesis of malbrancheamide, a dichlorinated fungal indole alkaloid that belongs to a family of natural products containing a characteristic bicyclo[2.2.2]diazaoctane core. The first step of malbrancheamide biosynthesis involves coupling of L-proline and L-tryptophan by malG, a bimodular NRPS, to produce L-Pro-L-Trp aldehyde through reductive offloading. This compound undergoes spontaneous cyclization and dehydration to give a dienamine which is reverse prenylated at C-2 by malE. The other prenyltransferase present in the cluster, malB, displays modest activity, suggesting that may be a redundant gene in the pathway. Subsequently, a [4+2] Diels-Alder cyclo-addition catalyzed by the bifunctional enzyme malC forms the characteristic bicyclo[2.2.2]diazaoctane ring of premalbrancheamid. The first reaction catalyzed is a NADPH-dependent reduction reaction in which the nicotinamide cofactor is a stoichiometric reagent. Either NADH or NADPH is effective as a cofactor. NADP(+) is required for stereocontrolled formation of premalbrancheamide, however it does not appear to be required as a formal stoichiometric reagent because the second reaction performed by malC, the [4+2] cycloaddition, is a balanced chemical reaction without requirement for hydride transfer to balance the reaction. Finally, the flavin-dependent halogenase malA catalyzes the iterative dichlorination of the indole ring of premalbrancheamide to yield C-9 monochlorinated malbrancheamide B, C-8 monochlorinated isomalbrancheamide B, and dichlorinated malbrancheamide. MalA is also able to brominate premalbrancheamide at C-9 to yield malbrancheamide C, and, to a lesser extend, at C-8 to yield isomalbrancheamide C. Finally, malA can brominate C-9 monochlorinated malbrancheamide B at C-8 to yield malbrancheamide D, or C-8 monochlorinated isomalbrancheamide B at C-9 to produce isomalbrancheamide D. The protein is Short-chain dehydrogenase/reductase malC of Malbranchea aurantiaca.